The primary structure comprises 517 residues: 2,3-bisphosphoglycerate-independent phosphoglycerate mutase (517 aa).

The Mn(2+) site is built by D14 and S64. S64 serves as the catalytic Phosphoserine intermediate. Substrate-binding positions include H125, 155 to 156 (RD), R187, R193, 263 to 266 (RSDR), and K337. The Mn(2+) site is built by D404, H408, D445, H446, and H464.

This sequence belongs to the BPG-independent phosphoglycerate mutase family. As to quaternary structure, monomer. Mn(2+) serves as cofactor.

The enzyme catalyses (2R)-2-phosphoglycerate = (2R)-3-phosphoglycerate. It functions in the pathway carbohydrate degradation; glycolysis; pyruvate from D-glyceraldehyde 3-phosphate: step 3/5. Its function is as follows. Catalyzes the interconversion of 2-phosphoglycerate and 3-phosphoglycerate. The sequence is that of 2,3-bisphosphoglycerate-independent phosphoglycerate mutase from Nitrosococcus oceani (strain ATCC 19707 / BCRC 17464 / JCM 30415 / NCIMB 11848 / C-107).